Here is a 338-residue protein sequence, read N- to C-terminus: MNVYYDRDCDLALIQSKKVTIVGYGSQGHAHACNLKDSGVDVTVALREGSASAVKAQNAGLKVATVAEAVASADVIMILTPDEFQSVLYRDEIEPKLKKGATLAFAHGFAIHYNQIVPRADLDVIMIAPKAPGHTVRSEYVRGGGIPDLIAVFQDASGKAREVALSYASAIGGGRTGIIETTFKDETETDLFGEQAVLCGGAVELVKAGFETLVEAGYAPEMAYFECLHELKLIVDLMFEGGIANMNYSISNNAEYGEYVTGPKVINEQSRAAMKECLNNIQNGEYAKRFILEGMSNYPEMTARRRLNAAHPIEVVGGNLRAMMPWIGKNKIVDKAKN.

A KARI N-terminal Rossmann domain is found at 1–181 (MNVYYDRDCD…GGGRTGIIET (181 aa)). NADP(+) contacts are provided by residues 24–27 (YGSQ), arginine 47, serine 50, serine 52, and 82–85 (DEFQ). Residue histidine 107 is part of the active site. Glycine 133 provides a ligand contact to NADP(+). Positions 182–327 (TFKDETETDL…GNLRAMMPWI (146 aa)) constitute a KARI C-terminal knotted domain. Positions 190, 194, 226, and 230 each coordinate Mg(2+). Serine 251 lines the substrate pocket.

It belongs to the ketol-acid reductoisomerase family. Mg(2+) serves as cofactor.

It carries out the reaction (2R)-2,3-dihydroxy-3-methylbutanoate + NADP(+) = (2S)-2-acetolactate + NADPH + H(+). The enzyme catalyses (2R,3R)-2,3-dihydroxy-3-methylpentanoate + NADP(+) = (S)-2-ethyl-2-hydroxy-3-oxobutanoate + NADPH + H(+). It functions in the pathway amino-acid biosynthesis; L-isoleucine biosynthesis; L-isoleucine from 2-oxobutanoate: step 2/4. The protein operates within amino-acid biosynthesis; L-valine biosynthesis; L-valine from pyruvate: step 2/4. Its function is as follows. Involved in the biosynthesis of branched-chain amino acids (BCAA). Catalyzes an alkyl-migration followed by a ketol-acid reduction of (S)-2-acetolactate (S2AL) to yield (R)-2,3-dihydroxy-isovalerate. In the isomerase reaction, S2AL is rearranged via a Mg-dependent methyl migration to produce 3-hydroxy-3-methyl-2-ketobutyrate (HMKB). In the reductase reaction, this 2-ketoacid undergoes a metal-dependent reduction by NADPH to yield (R)-2,3-dihydroxy-isovalerate. In Trichlorobacter lovleyi (strain ATCC BAA-1151 / DSM 17278 / SZ) (Geobacter lovleyi), this protein is Ketol-acid reductoisomerase (NADP(+)).